A 189-amino-acid polypeptide reads, in one-letter code: MKTKNRPPRRRAPVQDTEATPGEGTPDGSLPNPGPEPAKGLRSRPARAAARAPGEGRRRRPGPSGPGGRRDSSIQRRLESNERERQRMHKLNNAFQALREVIPHVRADKKLSKIETLTLAKNYIKSLTATILTMSSSRLPGLEGPGPKLYQHYQQQQQVAGGALGATEAQPQGHLQRYSTQIHSFREGT.

The segment covering 1-12 (MKTKNRPPRRRA) has biased composition (basic residues). Disordered stretches follow at residues 1–85 (MKTK…ERER) and 167–189 (TEAQ…REGT). The residue at position 25 (T25) is a Phosphothreonine. A compositionally biased stretch (basic and acidic residues) spans 68–85 (GRRDSSIQRRLESNERER). A bHLH domain is found at 75–127 (QRRLESNERERQRMHKLNNAFQALREVIPHVRADKKLSKIETLTLAKNYIKSL).

In terms of assembly, forms homodimers or heterodimers with TCF3 gene products E12 and E47. These dimers bind to the E-box site, however, heterodimer with MYOD1 does not bind target DNA. As to expression, expressed in brain, liver, spleen and skeletal muscle.

The protein localises to the nucleus. In terms of biological role, plays a role in controlling the transcriptional activity of MYOD1, ensuring that expanding myoblast populations remain undifferentiated. Repression may occur through muscle-specific E-box occupancy by homodimers. May also negatively regulate bHLH-mediated transcription through an N-terminal repressor domain. Serves as a key regulator of acinar cell function, stability, and identity. Also required for normal organelle localization in exocrine cells and for mitochondrial calcium ion transport. May function as a unique regulator of gene expression in several different embryonic and postnatal cell lineages. Binds to the E-box consensus sequence 5'-CANNTG-3'. This is Class A basic helix-loop-helix protein 15 (BHLHA15) from Homo sapiens (Human).